The primary structure comprises 485 residues: Glucagon receptor (485 aa).

Positions 1 to 26 (MPLTQLHCPHLLLLLLVLSCLPEAPS) are cleaved as a signal peptide. The Extracellular portion of the chain corresponds to 27–137 (AQVMDFLFEK…EIEVQKGVAK (111 aa)). 3 cysteine pairs are disulfide-bonded: C44-C68, C59-C101, and C82-C122. N-linked (GlcNAc...) asparagine glycosylation is found at N47, N60, N75, N79, and N118. Residues 138-162 (MYSSQQVMYTVGYSLSLGALLLALV) traverse the membrane as a helical segment. Residues 163-174 (ILLGLRKLHCTR) lie on the Cytoplasmic side of the membrane. The helical transmembrane segment at 175–199 (NYIHGNLFASFVLKAGSVLVIDWLL) threads the bilayer. Over 200–226 (KTRYSQKIGDDLSVSVWLSDGAMAGCR) the chain is Extracellular. C225 and C295 form a disulfide bridge. Residues 227 to 250 (VATVIMQYGIIANYCWLLVEGVYL) form a helical membrane-spanning segment. Residues 251–264 (YSLLSLATFSERSF) are Cytoplasmic-facing. Residues 265-286 (FSLYLGIGWGAPLLFVIPWVVV) traverse the membrane as a helical segment. At 287-304 (KCLFENVQCWTSNDNMGF) the chain is on the extracellular side. A helical transmembrane segment spans residues 305 to 327 (WWILRIPVFLALLINFFIFVHII). Over 328–351 (HLLVAKLRAHQMHYADYKFRLARS) the chain is Cytoplasmic. The segment at 351 to 354 (STLT) is important for allosteric inhibitor binding. Residues 352 to 370 (TLTLIPLLGVHEVVFAFVT) form a helical membrane-spanning segment. The Extracellular portion of the chain corresponds to 371 to 382 (DEHAQGTLRSTK). A helical membrane pass occupies residues 383–403 (LFFDLFLSSFQGLLVAVLYCF). The Cytoplasmic portion of the chain corresponds to 404–485 (LNKEVQAELM…SLPRLADSPT (82 aa)). Over residues 457 to 475 (AGSSSGTGCVPSMETSLAS) the composition is skewed to polar residues. The disordered stretch occupies residues 457-485 (AGSSSGTGCVPSMETSLASSLPRLADSPT). A phosphoserine mark is found at S460 and S476.

The protein belongs to the G-protein coupled receptor 2 family. Post-translationally, ligand-binding promotes phosphorylation of serine residues in the C-terminal cytoplasmic domain. Phosphorylation is important for receptor endocytosis after ligand-binding. As to expression, expressed predominantly in liver, kidney, adrenal, lung and stomach, while lower levels of expression are detected in brown and white adipose tissue, cerebellum, duodenum and heart.

It localises to the cell membrane. Functionally, G-protein coupled receptor for glucagon that plays a central role in the regulation of blood glucose levels and glucose homeostasis. Regulates the rate of hepatic glucose production by promoting glycogen hydrolysis and gluconeogenesis. Plays an important role in mediating the responses to fasting. Ligand binding causes a conformation change that triggers signaling via guanine nucleotide-binding proteins (G proteins) and modulates the activity of down-stream effectors, such as adenylate cyclase. Promotes activation of adenylate cyclase. Besides, plays a role in signaling via a phosphatidylinositol-calcium second messenger system. This Mus musculus (Mouse) protein is Glucagon receptor (Gcgr).